A 182-amino-acid chain; its full sequence is CDP-diacylglycerol--glycerol-3-phosphate 3-phosphatidyltransferase (182 aa).

Residues 2–12 (QFNIPTLLTLF) are Cytoplasmic-facing. Residues 13–37 (RVILIPFFVVVFYLPFAWAPMVSAL) traverse the membrane as a helical segment. Residues 38-60 (IFCIAAITDWFDGFLARRWNQST) lie on the Periplasmic side of the membrane. The chain crosses the membrane as a helical span at residues 61–81 (RFGAFLDPVADKVLVAIAMVL). Residues 82–86 (VTEHY) are Cytoplasmic-facing. The helical transmembrane segment at 87–107 (HSWWVTLPAATMIAREIIISA) threads the bilayer. Residues 108–145 (LREWMAELGKRSSVAVSWIGKVKTTAQMVALAWLLWRP) lie on the Periplasmic side of the membrane. The chain crosses the membrane as a helical span at residues 146 to 168 (NIWVEYAGIALFFVAAVLTLWSM). Residues 169–181 (LQYLSAARGDLLD) are Cytoplasmic-facing.

The protein belongs to the CDP-alcohol phosphatidyltransferase class-I family.

The protein localises to the cell inner membrane. It catalyses the reaction a CDP-1,2-diacyl-sn-glycerol + sn-glycerol 3-phosphate = a 1,2-diacyl-sn-glycero-3-phospho-(1'-sn-glycero-3'-phosphate) + CMP + H(+). It functions in the pathway phospholipid metabolism; phosphatidylglycerol biosynthesis; phosphatidylglycerol from CDP-diacylglycerol: step 1/2. Its function is as follows. Catalyzes the conversion of cytidine diphosphate diacylglycerol (CDP-DG) and glycerol 3-phosphate into phosphatidylglycerol. Essential for the synthesis of anionic phospholipids, thereby playing a role in balancing the ratio of zwitterionic and anionic phospholipids, which is thought to be important for normal membrane function. The sequence is that of CDP-diacylglycerol--glycerol-3-phosphate 3-phosphatidyltransferase from Salmonella paratyphi A (strain ATCC 9150 / SARB42).